We begin with the raw amino-acid sequence, 621 residues long: Uptake hydrogenase large subunit (621 aa).

Residues C75, C78, C600, and C603 each coordinate Ni(2+).

The protein belongs to the [NiFe]/[NiFeSe] hydrogenase large subunit family. As to quaternary structure, heterodimer of a large and a small subunit. Requires Ni(2+) as cofactor.

It localises to the cell membrane. The catalysed reaction is H2 + A = AH2. Its function is as follows. This enzyme recycles the H(2) produced by nitrogenase to increase the production of ATP and to protect nitrogenase against inhibition or damage by O(2) under carbon- or phosphate-limited conditions. The protein is Uptake hydrogenase large subunit (hupL) of Alcaligenes hydrogenophilus.